Reading from the N-terminus, the 85-residue chain is RNA-binding protein Hfq (85 aa).

In terms of domain architecture, Sm spans Asp10–Val70.

It belongs to the Hfq family. As to quaternary structure, homohexamer.

In terms of biological role, RNA chaperone that binds small regulatory RNA (sRNAs) and mRNAs to facilitate mRNA translational regulation in response to envelope stress, environmental stress and changes in metabolite concentrations. Also binds with high specificity to tRNAs. This chain is RNA-binding protein Hfq, found in Carboxydothermus hydrogenoformans (strain ATCC BAA-161 / DSM 6008 / Z-2901).